Consider the following 473-residue polypeptide: Cysteine--tRNA ligase (473 aa).

Cys-33 serves as a coordination point for Zn(2+). Positions 35 to 45 (ATVQGQPHIGH) match the 'HIGH' region motif. The Zn(2+) site is built by Cys-211, His-236, and Glu-240. Positions 267-271 (KMSKS) match the 'KMSKS' region motif. Position 270 (Lys-270) interacts with ATP.

This sequence belongs to the class-I aminoacyl-tRNA synthetase family. Monomer. Zn(2+) is required as a cofactor.

It is found in the cytoplasm. It catalyses the reaction tRNA(Cys) + L-cysteine + ATP = L-cysteinyl-tRNA(Cys) + AMP + diphosphate. This Mycobacterium leprae (strain Br4923) protein is Cysteine--tRNA ligase.